We begin with the raw amino-acid sequence, 349 residues long: MEFTAQQIADFLHGSVEGNPKVRLHDFAKIEEGRSGCLSFLANAKYEHYLYQTQSDAVLVNQDFEPRESVKTTLIRVPNAYAALAQLMQLVDSMKPQRKGVDSTAFVHPSVILPDDCYVGAFAYVSEGASLGTGCSLYPHVYVGSGVSVGEGTILYPHVTVYDGCSIGSRCVIHSGAVIGADGFGFAPNAEGYSKIPQLGNVIIEDDVEIGANTCIDRAVMDSTIIHRGVKLDNLVQIAHNCSVGSHTVFAAQVGMAGSSHVGEWCQFGGQVGLSGHIKVGDRVSLGGQTGLLSNVKSGSTLLGSPGMPLRDMLRASVIFPKLPDMSLRIEQLEKEISELKEICKNNKH.

The active-site Proton acceptor is the H240.

The protein belongs to the transferase hexapeptide repeat family. LpxD subfamily. Homotrimer.

It carries out the reaction a UDP-3-O-[(3R)-3-hydroxyacyl]-alpha-D-glucosamine + a (3R)-hydroxyacyl-[ACP] = a UDP-2-N,3-O-bis[(3R)-3-hydroxyacyl]-alpha-D-glucosamine + holo-[ACP] + H(+). Its pathway is bacterial outer membrane biogenesis; LPS lipid A biosynthesis. Catalyzes the N-acylation of UDP-3-O-acylglucosamine using 3-hydroxyacyl-ACP as the acyl donor. Is involved in the biosynthesis of lipid A, a phosphorylated glycolipid that anchors the lipopolysaccharide to the outer membrane of the cell. This Porphyromonas gingivalis (strain ATCC 33277 / DSM 20709 / CIP 103683 / JCM 12257 / NCTC 11834 / 2561) protein is UDP-3-O-acylglucosamine N-acyltransferase.